The primary structure comprises 288 residues: Pantothenate synthetase (288 aa).

30–37 (MGNLHAGH) is a binding site for ATP. The Proton donor role is filled by His-37. Gln-61 lines the (R)-pantoate pocket. Gln-61 serves as a coordination point for beta-alanine. ATP is bound at residue 149 to 152 (GLKD). Gln-155 contributes to the (R)-pantoate binding site. ATP is bound by residues Ile-178 and 186-189 (LSSR).

Belongs to the pantothenate synthetase family. In terms of assembly, homodimer.

Its subcellular location is the cytoplasm. It carries out the reaction (R)-pantoate + beta-alanine + ATP = (R)-pantothenate + AMP + diphosphate + H(+). Its pathway is cofactor biosynthesis; (R)-pantothenate biosynthesis; (R)-pantothenate from (R)-pantoate and beta-alanine: step 1/1. Catalyzes the condensation of pantoate with beta-alanine in an ATP-dependent reaction via a pantoyl-adenylate intermediate. The sequence is that of Pantothenate synthetase from Colwellia psychrerythraea (strain 34H / ATCC BAA-681) (Vibrio psychroerythus).